The following is a 383-amino-acid chain: MTAHAELSPTLQLACDLIRRPSVTPIDADCQKLMMQRLGDAGFKLEPMRIEDVDNFWASHGQHEGPVLCFAGHTDVVPTGPVQAWQNDPFDALIDEHGMLCGRGAADMKGSLAAMLVAAERFVTDYPDHKGSVAFLITSDEEGPAHHGTKAVVERLAARKERLDWCIVGEPSSTSLVGDVVKNGRRGSLGAKLTVRGVQGHVAYPHLAKNPIHLAAPALAELAAEHWDDGNAFFPPTSFQISNLNSGTGATNVIPGDLVAVFNFRFSTESTVEGLQQRVAAILDKHGLDWHVEWALSGLPFLTEPGALLDAVSASIKQVTGRDTKASTSGGTSDGRFIATLGTQVVELGPVNATIHQVNERVLASDLDVLTEIYYQTLIKLLA.

Zn(2+) is bound at residue His73. Asp75 is a catalytic residue. Asp107 is a binding site for Zn(2+). The active-site Proton acceptor is Glu141. Residues Glu142, Glu170, and His356 each contribute to the Zn(2+) site.

The protein belongs to the peptidase M20A family. DapE subfamily. As to quaternary structure, homodimer. Requires Zn(2+) as cofactor. The cofactor is Co(2+).

It catalyses the reaction N-succinyl-(2S,6S)-2,6-diaminopimelate + H2O = (2S,6S)-2,6-diaminopimelate + succinate. It participates in amino-acid biosynthesis; L-lysine biosynthesis via DAP pathway; LL-2,6-diaminopimelate from (S)-tetrahydrodipicolinate (succinylase route): step 3/3. Functionally, catalyzes the hydrolysis of N-succinyl-L,L-diaminopimelic acid (SDAP), forming succinate and LL-2,6-diaminopimelate (DAP), an intermediate involved in the bacterial biosynthesis of lysine and meso-diaminopimelic acid, an essential component of bacterial cell walls. In Pseudomonas fluorescens (strain ATCC BAA-477 / NRRL B-23932 / Pf-5), this protein is Succinyl-diaminopimelate desuccinylase.